A 399-amino-acid chain; its full sequence is Elongation factor Tu (399 aa).

Residues 10 to 204 (KPHVNIGTIG…AVDASIPEPE (195 aa)) enclose the tr-type G domain. The G1 stretch occupies residues 19-26 (GHVDHGKT). 19-26 (GHVDHGKT) contacts GTP. Threonine 26 serves as a coordination point for Mg(2+). The G2 stretch occupies residues 60 to 64 (GITIN). A G3 region spans residues 81 to 84 (DCPG). GTP-binding positions include 81 to 85 (DCPGH) and 136 to 139 (NKCD). The G4 stretch occupies residues 136–139 (NKCD). Positions 174-176 (SGL) are G5.

This sequence belongs to the TRAFAC class translation factor GTPase superfamily. Classic translation factor GTPase family. EF-Tu/EF-1A subfamily. Monomer.

It localises to the cytoplasm. It catalyses the reaction GTP + H2O = GDP + phosphate + H(+). Its function is as follows. GTP hydrolase that promotes the GTP-dependent binding of aminoacyl-tRNA to the A-site of ribosomes during protein biosynthesis. The chain is Elongation factor Tu from Prochlorococcus marinus (strain MIT 9515).